The primary structure comprises 378 residues: Erythronate-4-phosphate dehydrogenase (378 aa).

Substrate contacts are provided by Ser-45 and Thr-66. Residues Asp-146 and Thr-175 each contribute to the NAD(+) site. Arg-208 is an active-site residue. Asp-232 is a binding site for NAD(+). The active site involves Glu-237. His-254 acts as the Proton donor in catalysis. NAD(+) is bound at residue Gly-257. Substrate is bound at residue Tyr-258.

It belongs to the D-isomer specific 2-hydroxyacid dehydrogenase family. PdxB subfamily. In terms of assembly, homodimer.

It is found in the cytoplasm. It carries out the reaction 4-phospho-D-erythronate + NAD(+) = (R)-3-hydroxy-2-oxo-4-phosphooxybutanoate + NADH + H(+). Its pathway is cofactor biosynthesis; pyridoxine 5'-phosphate biosynthesis; pyridoxine 5'-phosphate from D-erythrose 4-phosphate: step 2/5. In terms of biological role, catalyzes the oxidation of erythronate-4-phosphate to 3-hydroxy-2-oxo-4-phosphonooxybutanoate. In Escherichia coli O81 (strain ED1a), this protein is Erythronate-4-phosphate dehydrogenase.